We begin with the raw amino-acid sequence, 202 residues long: AFG2-interacting ribosome maturation factor (202 aa).

In terms of assembly, part of the 55LCC heterohexameric ATPase complex. Does not associate with pre-60S ribosomal particles.

The protein localises to the nucleus. Its subcellular location is the cytoplasm. Its function is as follows. Part of the 55LCC heterohexameric ATPase complex which is chromatin-associated and promotes replisome proteostasis to maintain replication fork progression and genome stability. Required for replication fork progression, sister chromatid cohesion, and chromosome stability. The ATPase activity is specifically enhanced by replication fork DNA and is coupled to cysteine protease-dependent cleavage of replisome substrates in response to replication fork damage. Uses ATPase activity to process replisome substrates in S-phase, facilitating their proteolytic turnover from chromatin to ensure DNA replication and mitotic fidelity. Involved in the cytoplasmic maturation steps of pre-60S ribosomal particles by promoting the release of shuttling protein RSL24D1/RLP24 from the pre-ribosomal particles. Plays an essential role in early embryonic development. This is AFG2-interacting ribosome maturation factor (airim) from Danio rerio (Zebrafish).